The primary structure comprises 328 residues: Formimidoylglutamase (328 aa).

Mn(2+) is bound by residues histidine 133, aspartate 159, histidine 161, aspartate 163, aspartate 253, and aspartate 255.

Belongs to the arginase family. Mn(2+) is required as a cofactor.

The enzyme catalyses N-formimidoyl-L-glutamate + H2O = formamide + L-glutamate. Its pathway is amino-acid degradation; L-histidine degradation into L-glutamate; L-glutamate from N-formimidoyl-L-glutamate (hydrolase route): step 1/1. Catalyzes the conversion of N-formimidoyl-L-glutamate to L-glutamate and formamide. The polypeptide is Formimidoylglutamase (Streptococcus pyogenes serotype M18 (strain MGAS8232)).